The primary structure comprises 215 residues: Probable ribosome-binding factor A, chloroplastic (215 aa).

A chloroplast-targeting transit peptide spans 1–52 (MPNLLHTNQSHFFFLHHPPIYTVSSKTQAFHFPQSMAPVNLRTNLSVRRTVR). Residues 183–192 (KGSGEGKTEP) are compositionally biased toward basic and acidic residues. The interval 183-210 (KGSGEGKTEPSDSTEDDQDWEVDDPDED) is disordered. Positions 194–210 (DSTEDDQDWEVDDPDED) are enriched in acidic residues.

This sequence belongs to the RbfA family.

It is found in the plastid. The protein localises to the chloroplast. The polypeptide is Probable ribosome-binding factor A, chloroplastic (Arabidopsis thaliana (Mouse-ear cress)).